We begin with the raw amino-acid sequence, 1246 residues long: Myosin-1 (1246 aa).

The disordered stretch occupies residues methionine 1 to alanine 41. The 680-residue stretch at isoleucine 51 to aspartate 730 folds into the Myosin motor domain. Glycine 144 to threonine 151 contributes to the ATP binding site. Serine 372 bears the Phosphoserine mark. Positions serine 419–alanine 501 are actin-binding. IQ domains lie at histidine 734–cysteine 754 and alanine 755–lysine 780. In terms of domain architecture, TH1 spans arginine 788–proline 976. Residues glycine 956 to threonine 970 are compositionally biased toward polar residues. 2 disordered regions span residues glycine 956–proline 1080 and tryptophan 1127–tryptophan 1246. Pro residues-rich tracts occupy residues alanine 1033–glutamine 1045 and alanine 1065–lysine 1078. The SH3 domain maps to proline 1077–alanine 1138. 2 stretches are compositionally biased toward low complexity: residues threonine 1151–lysine 1166 and asparagine 1214–alanine 1228. Over residues leucine 1229 to glutamine 1240 the composition is skewed to basic and acidic residues.

It belongs to the TRAFAC class myosin-kinesin ATPase superfamily. Myosin family. In terms of processing, phosphorylation of the TEDS site (Ser-372) is required for the polarization of the actin cytoskeleton. Phosphorylation probably activates the myosin-I ATPase activity.

The protein resides in the cytoplasm. The protein localises to the cytoskeleton. Its subcellular location is the actin patch. In terms of biological role, type-I myosin implicated in the organization of the actin cytoskeleton. Required for proper actin cytoskeleton polarization. At the cell cortex, assembles in patch-like structures together with proteins from the actin-polymerizing machinery and promotes actin assembly. Functions as actin nucleation-promoting factor (NPF) for the Arp2/3 complex. Plays an important role in polarized growth, spore germination, hyphal morphogenesis, and septal wall formation. This is Myosin-1 (myoA) from Aspergillus terreus (strain NIH 2624 / FGSC A1156).